Reading from the N-terminus, the 141-residue chain is Putative pre-16S rRNA nuclease (141 aa).

It belongs to the YqgF nuclease family.

The protein localises to the cytoplasm. In terms of biological role, could be a nuclease involved in processing of the 5'-end of pre-16S rRNA. The chain is Putative pre-16S rRNA nuclease from Pseudomonas putida (strain ATCC 47054 / DSM 6125 / CFBP 8728 / NCIMB 11950 / KT2440).